The primary structure comprises 447 residues: UDP-N-acetylmuramoylalanine--D-glutamate ligase (447 aa).

112–118 (GTNGKST) provides a ligand contact to ATP.

The protein belongs to the MurCDEF family.

It localises to the cytoplasm. It carries out the reaction UDP-N-acetyl-alpha-D-muramoyl-L-alanine + D-glutamate + ATP = UDP-N-acetyl-alpha-D-muramoyl-L-alanyl-D-glutamate + ADP + phosphate + H(+). The protein operates within cell wall biogenesis; peptidoglycan biosynthesis. Cell wall formation. Catalyzes the addition of glutamate to the nucleotide precursor UDP-N-acetylmuramoyl-L-alanine (UMA). The polypeptide is UDP-N-acetylmuramoylalanine--D-glutamate ligase (Legionella pneumophila (strain Paris)).